The following is a 216-amino-acid chain: Probable GTP-binding protein EngB (216 aa).

The EngB-type G domain maps to 37–214 (AGLEVAFAGR…RAAMIKLIAE (178 aa)). GTP is bound by residues 45 to 52 (GRSNVGKS), 72 to 76 (GRTQE), 92 to 95 (DMPG), 159 to 162 (TKAD), and 193 to 195 (TSS). Positions 52 and 74 each coordinate Mg(2+).

This sequence belongs to the TRAFAC class TrmE-Era-EngA-EngB-Septin-like GTPase superfamily. EngB GTPase family. Requires Mg(2+) as cofactor.

Its function is as follows. Necessary for normal cell division and for the maintenance of normal septation. The sequence is that of Probable GTP-binding protein EngB from Rhodopseudomonas palustris (strain BisB18).